The following is a 423-amino-acid chain: MSYVIDRRLNGKNKSTVNRQRFLRRYREHIKKAVEEAVSRRSITDMEHGEQISIPGRDIDEPVLHHGRGGRQTVVHPGNKEFTAGEHIARPSGGGGGRGGGKASNSGEGMDDFVFQITQEEFLDFMFEDLELPNLVKRHITGTDTFKTVRAGISNDGNPSRINIVRTLRSAHARRIALSGGSRAKLRAALKELERIKREEPDNLGDIQELELEIAKLRARIDRVPFLDTFDLKYNLLVKQPNPTSKAVMFCLMDVSGSMTQATKDIAKRFFILLYLFLKRNYEKIEVVFIRHHTSAREVDEEEFFYSRETGGTIVSSALKMMQEIMAERYPTHEWNIYAAQASDGDNWNDDSPVCRDILLKQIMPFVQYYTYVEITPREHQALWFEYERVREAFEDSFAQQQIVSASDIYPVFRELFQRRLVA.

The segment at 84–107 (AGEHIARPSGGGGGRGGGKASNSG) is disordered. Positions 92 to 102 (SGGGGGRGGGK) are enriched in gly residues.

The protein belongs to the UPF0229 family.

The polypeptide is UPF0229 protein PLES_05841 (Pseudomonas aeruginosa (strain LESB58)).